The chain runs to 395 residues: MRSIWNGAISFGLVSIPIKLVNATENHSISFRQIHLADGGRIRYRKVCELDEQEVSGSETGKAYEDADGTMIPITDEDLAQLPLPTAKTIEIVAFVPADRIDPLQMDAAYYLSANGVPAAKPYTLLREALKRSNRVAVAKYALRGRERLGMLRVVGEVIALHGLLWPDEIRPPEDAAPDGDITVRDAELDLADTLMSTLGEVDMDSLHDDYREAVEELAAAKASGESVPPAEPEDTGGEVIDLIAALENSVRAARTSRDDEGAGGDGGDMADVHPIGRGAKASSKTSGQSSGKAARTTKTARRTTHRTPTGKTVTRSGDSTAEKSAPKSSGAKKSTAKKSTAKKTAAQKTTARKTTAKKTTAKGTTGTTAAAKKRTSSGGGTAKKSASSRKRTSA.

The 173-residue stretch at 9–181 (ISFGLVSIPI…PPEDAAPDGD (173 aa)) folds into the Ku domain. Residues 252-395 (RAARTSRDDE…SASSRKRTSA (144 aa)) are disordered. 2 stretches are compositionally biased toward polar residues: residues 283–292 (SSKTSGQSSG) and 311–320 (GKTVTRSGDS). Residues 351 to 361 (TARKTTAKKTT) are compositionally biased toward basic residues. The segment covering 362–371 (AKGTTGTTAA) has biased composition (low complexity).

It belongs to the prokaryotic Ku family. In terms of assembly, homodimer. Interacts with LigD.

Its function is as follows. With LigD forms a non-homologous end joining (NHEJ) DNA repair enzyme, which repairs dsDNA breaks with reduced fidelity. Binds linear dsDNA with 5'- and 3'- overhangs but not closed circular dsDNA nor ssDNA. Recruits and stimulates the ligase activity of LigD. The protein is Non-homologous end joining protein Ku of Streptomyces griseus subsp. griseus (strain JCM 4626 / CBS 651.72 / NBRC 13350 / KCC S-0626 / ISP 5235).